We begin with the raw amino-acid sequence, 493 residues long: DM7 family protein GM11958 (493 aa).

The interval 434–493 (ATKSTDTRDDGMNTADYQSQFPELEQDSEPEPEPEPEPQTEDEGEDEDIEILASLCSGSI) is disordered. Acidic residues predominate over residues 457–483 (LEQDSEPEPEPEPEPQTEDEGEDEDIE).

It belongs to the DM7 family.

This Drosophila sechellia (Fruit fly) protein is DM7 family protein GM11958.